The primary structure comprises 214 residues: CASP-like protein 0U1 (214 aa).

The Cytoplasmic portion of the chain corresponds to 1–82 (MATSEAPLLK…GFTSFYQFKG (82 aa)). Residues 83 to 103 (VVGVYAAFWVYTVLLIGLYLF) form a helical membrane-spanning segment. Topologically, residues 104-112 (SRGPPPGTE) are extracellular. Residues 113–133 (FVVHALFTLCMIAFVSLSVIS) form a helical membrane-spanning segment. At 134–153 (CTSTVIESDYSVCKNAAYAK) the chain is on the cytoplasmic side. A helical transmembrane segment spans residues 154 to 174 (ASLVFAALVVVLNCATCAFVF). Over 175–214 (KQWRSLQFVGMPENFRPFGRHRHKHGHHAGDADDAIPTHP) the chain is Extracellular. Residues 194 to 214 (RHRHKHGHHAGDADDAIPTHP) are disordered.

Belongs to the Casparian strip membrane proteins (CASP) family. As to quaternary structure, homodimer and heterodimers.

The protein localises to the cell membrane. In Ostreococcus tauri, this protein is CASP-like protein 0U1.